Here is a 371-residue protein sequence, read N- to C-terminus: MPHHYILTLFGLLPVATNISTWWNFGSMLLTCLALQVLTGFFLAVHYTANINLAFSSIIHITRDVPYGWMMQNLHAIGASMFFICIYIHIARGLYYGSYLNKETWMSGITLLITLMATAFFGYVLPWGQMSFWAATVITNLLTAIPYLGTSLTTWLWGGFAINDPTLTRFFALHFILPFAIISLSSLHIILLHEEGSSNPLGTNPDIDKIPFHPYHSYKDLLLLTLMILFLFIIVSFFPDIFNDPDNFSKANPLVTPQHIKPEWYFLFAYGILRSIPNKLGGALALVMSIMILFTIPFMHTAHLRPMTFRPLSQLMFWTLVSTFITITWAATKPVEPPYIMISQMTATLYFTFFLSIPILGWMENKMMNIP.

Transmembrane regions (helical) follow at residues Phe-25–Val-45, Trp-69–Ile-90, Trp-105–Leu-125, and Phe-170–Ile-190. Heme b is bound by residues His-75 and His-89. 2 residues coordinate heme b: His-174 and His-188. His-193 serves as a coordination point for a ubiquinone. 4 helical membrane passes run Tyr-218 to Phe-238, Leu-280 to His-300, Leu-312 to Thr-332, and Tyr-339 to Pro-358.

The protein belongs to the cytochrome b family. The cytochrome bc1 complex contains 3 respiratory subunits (MT-CYB, CYC1 and UQCRFS1), 2 core proteins (UQCRC1 and UQCRC2) and probably 6 low-molecular weight proteins. Requires heme b as cofactor.

It is found in the mitochondrion inner membrane. Component of the ubiquinol-cytochrome c reductase complex (complex III or cytochrome b-c1 complex) that is part of the mitochondrial respiratory chain. The b-c1 complex mediates electron transfer from ubiquinol to cytochrome c. Contributes to the generation of a proton gradient across the mitochondrial membrane that is then used for ATP synthesis. This chain is Cytochrome b (MT-CYB), found in Simalia amethistina (Amethystine python).